A 701-amino-acid chain; its full sequence is Elongation factor G 2 (701 aa).

Positions 8–290 (NRYRNIGIVA…AVIEFLPAPA (283 aa)) constitute a tr-type G domain. GTP-binding positions include 17–24 (AHVDAGKT), 88–92 (DTPGH), and 142–145 (NKMD).

Belongs to the TRAFAC class translation factor GTPase superfamily. Classic translation factor GTPase family. EF-G/EF-2 subfamily.

The protein localises to the cytoplasm. Functionally, catalyzes the GTP-dependent ribosomal translocation step during translation elongation. During this step, the ribosome changes from the pre-translocational (PRE) to the post-translocational (POST) state as the newly formed A-site-bound peptidyl-tRNA and P-site-bound deacylated tRNA move to the P and E sites, respectively. Catalyzes the coordinated movement of the two tRNA molecules, the mRNA and conformational changes in the ribosome. The polypeptide is Elongation factor G 2 (Pseudoalteromonas atlantica (strain T6c / ATCC BAA-1087)).